A 479-amino-acid polypeptide reads, in one-letter code: Anaerobic nitric oxide reductase flavorubredoxin (479 aa).

Residues 30 to 210 are zinc metallo-hydrolase; it reads LRGSSYNSYL…PFSRLVTPKI (181 aa). Residues His-79, Glu-81, Asp-83, His-147, Asp-166, and His-227 each coordinate Fe cation. The Flavodoxin-like domain maps to 254–393; it reads ITIFYDTMSN…LCRQHGRDIA (140 aa). FMN contacts are provided by residues 260–264 and 342–369; these read TMSNN and AFGS…EMSL. The 52-residue stretch at 423-474 folds into the Rubredoxin-like domain; the sequence is GPKMQCSVCQWIYDPAQGEPLQDVAPGTPWSDVPDNFLCPECSLGKDVFDVL. The Fe cation site is built by Cys-428, Cys-431, Cys-461, and Cys-464.

The protein in the N-terminal section; belongs to the zinc metallo-hydrolase group 3 family. As to quaternary structure, homotetramer. Fe cation is required as a cofactor. The cofactor is FMN.

It localises to the cytoplasm. Its pathway is nitrogen metabolism; nitric oxide reduction. Anaerobic nitric oxide reductase; uses NADH to detoxify nitric oxide (NO), protecting several 4Fe-4S NO-sensitive enzymes. Has at least 2 reductase partners, only one of which (NorW, flavorubredoxin reductase) has been identified. NO probably binds to the di-iron center; electrons enter from the NorW at rubredoxin and are transferred sequentially to the FMN center and the di-iron center. Also able to function as an aerobic oxygen reductase. This is Anaerobic nitric oxide reductase flavorubredoxin from Salmonella choleraesuis (strain SC-B67).